The chain runs to 73 residues: ATP synthase subunit c (73 aa).

2 consecutive transmembrane segments (helical) span residues 4 to 24 (LAIG…GIGI) and 51 to 71 (GALA…IIIF).

Belongs to the ATPase C chain family. As to quaternary structure, F-type ATPases have 2 components, F(1) - the catalytic core - and F(0) - the membrane proton channel. F(1) has five subunits: alpha(3), beta(3), gamma(1), delta(1), epsilon(1). F(0) has three main subunits: a(1), b(2) and c(10-14). The alpha and beta chains form an alternating ring which encloses part of the gamma chain. F(1) is attached to F(0) by a central stalk formed by the gamma and epsilon chains, while a peripheral stalk is formed by the delta and b chains.

It localises to the cell membrane. In terms of biological role, f(1)F(0) ATP synthase produces ATP from ADP in the presence of a proton or sodium gradient. F-type ATPases consist of two structural domains, F(1) containing the extramembraneous catalytic core and F(0) containing the membrane proton channel, linked together by a central stalk and a peripheral stalk. During catalysis, ATP synthesis in the catalytic domain of F(1) is coupled via a rotary mechanism of the central stalk subunits to proton translocation. Functionally, key component of the F(0) channel; it plays a direct role in translocation across the membrane. A homomeric c-ring of between 10-14 subunits forms the central stalk rotor element with the F(1) delta and epsilon subunits. The chain is ATP synthase subunit c from Caldanaerobacter subterraneus subsp. tengcongensis (strain DSM 15242 / JCM 11007 / NBRC 100824 / MB4) (Thermoanaerobacter tengcongensis).